Reading from the N-terminus, the 376-residue chain is Acetate kinase (376 aa).

Residue Asn7 coordinates Mg(2+). Position 14 (Lys14) interacts with ATP. Residue Arg71 participates in substrate binding. The Proton donor/acceptor role is filled by Asp128. ATP-binding positions include 188 to 192 (HLGNG), 262 to 264 (DFR), and 310 to 314 (GVGEN). Mg(2+) is bound at residue Glu364.

This sequence belongs to the acetokinase family. In terms of assembly, homodimer. Mg(2+) is required as a cofactor. It depends on Mn(2+) as a cofactor.

The protein localises to the cytoplasm. It carries out the reaction acetate + ATP = acetyl phosphate + ADP. It participates in metabolic intermediate biosynthesis; acetyl-CoA biosynthesis; acetyl-CoA from acetate: step 1/2. Its function is as follows. Catalyzes the formation of acetyl phosphate from acetate and ATP. Can also catalyze the reverse reaction. The polypeptide is Acetate kinase (Mycolicibacterium smegmatis (strain ATCC 700084 / mc(2)155) (Mycobacterium smegmatis)).